The sequence spans 310 residues: Protein translocase subunit SecF (310 aa).

6 consecutive transmembrane segments (helical) span residues 20–42 (FKKV…IGIY), 140–160 (IEAG…YIWV), 164–184 (WYFG…ALGF), 194–214 (LSTI…SVVI), 246–266 (ILTV…GGEA), and 272–292 (VLVF…SAPI).

Belongs to the SecD/SecF family. SecF subfamily. In terms of assembly, forms a complex with SecD. Part of the essential Sec protein translocation apparatus which comprises SecA, SecYEG and auxiliary proteins SecDF-YajC and YidC.

The protein localises to the cell inner membrane. Functionally, part of the Sec protein translocase complex. Interacts with the SecYEG preprotein conducting channel. SecDF uses the proton motive force (PMF) to complete protein translocation after the ATP-dependent function of SecA. In Rickettsia canadensis (strain McKiel), this protein is Protein translocase subunit SecF.